Reading from the N-terminus, the 185-residue chain is Threonylcarbamoyl-AMP synthase (185 aa).

A YrdC-like domain is found at 4 to 185 (SWRVQQAARE…LATGEIVRPG (182 aa)).

This sequence belongs to the SUA5 family. TsaC subfamily.

The protein resides in the cytoplasm. The enzyme catalyses L-threonine + hydrogencarbonate + ATP = L-threonylcarbamoyladenylate + diphosphate + H2O. In terms of biological role, required for the formation of a threonylcarbamoyl group on adenosine at position 37 (t(6)A37) in tRNAs that read codons beginning with adenine. Catalyzes the conversion of L-threonine, HCO(3)(-)/CO(2) and ATP to give threonylcarbamoyl-AMP (TC-AMP) as the acyladenylate intermediate, with the release of diphosphate. The protein is Threonylcarbamoyl-AMP synthase of Pseudomonas putida (strain W619).